A 624-amino-acid chain; its full sequence is Aliphatic sulfonate oxidoreductase, WOR-like subunit (624 aa).

8 residues coordinate tungstopterin: K77, S93, V94, S96, H195, A196, G198, and Y199. Residues D299, C302, and C306 each contribute to the [4Fe-4S] cluster site. Tungstopterin-binding residues include D353, L357, D358, G359, T470, D490, I494, C495, and N496. C495 is a binding site for [4Fe-4S] cluster. The tract at residues 552-575 (KDDDNPPRFYEPLPSGPVKGKAPN) is disordered.

The protein belongs to the AOR/FOR family. Heterodimer composed of a small WOR5-S subunit, with four [4Fe-4S] clusters, and a large WOR5-L subunit, containing the active site tungsto-bispyranopterin cofactor as well as another [4Fe-4S] cluster. [4Fe-4S] cluster serves as cofactor. Requires tungstopterin as cofactor.

It localises to the cytoplasm. The catalysed reaction is an aliphatic sulfonate + 4 oxidized [4Fe-4S]-[ferredoxin] + 2 H2O = 4 reduced [4Fe-4S]-[ferredoxin] + a carboxylate + sulfite + 6 H(+). The enzyme catalyses an aliphatic sulfonate + 2 oxidized [4Fe-4S]-[ferredoxin] + H2O = 2 reduced [4Fe-4S]-[ferredoxin] + an aldehyde + sulfite + 3 H(+). It carries out the reaction 2 oxidized [4Fe-4S]-[ferredoxin] + an aldehyde + H2O = 2 reduced [4Fe-4S]-[ferredoxin] + a carboxylate + 3 H(+). It catalyses the reaction 4 oxidized [4Fe-4S]-[ferredoxin] + taurine + 2 H2O = 4 reduced [4Fe-4S]-[ferredoxin] + sulfite + glycine + 6 H(+). The catalysed reaction is 2 oxidized [4Fe-4S]-[ferredoxin] + taurine + H2O = aminoacetaldehyde + 2 reduced [4Fe-4S]-[ferredoxin] + sulfite + 3 H(+). The enzyme catalyses aminoacetaldehyde + 2 oxidized [4Fe-4S]-[ferredoxin] + H2O = 2 reduced [4Fe-4S]-[ferredoxin] + glycine + 3 H(+). Functionally, WOR-like catalytic subunit of an oxidoreductase that can desulfonate and oxidize aliphatic sulfonates such as taurine. The activity involves two steps: an oxidative desulfonation reaction, followed by the activation of a second water molecule and oxidation of the resulting aldehyde. May be involved in the oxidation of various aliphatic sulfonates and also phosphonates. In vitro, has a broad substrate specificity with a high affinity for several substituted and nonsubstituted aliphatic and aromatic aldehydes with various chain lengths, with methyl viologen or benzyl viologen as electron acceptor. Ferredoxin is the physiological electron acceptor. The sequence is that of Aliphatic sulfonate oxidoreductase, WOR-like subunit from Pyrococcus furiosus (strain ATCC 43587 / DSM 3638 / JCM 8422 / Vc1).